Reading from the N-terminus, the 178-residue chain is Large ribosomal subunit protein uL6 (178 aa).

The protein belongs to the universal ribosomal protein uL6 family. In terms of assembly, part of the 50S ribosomal subunit.

Functionally, this protein binds to the 23S rRNA, and is important in its secondary structure. It is located near the subunit interface in the base of the L7/L12 stalk, and near the tRNA binding site of the peptidyltransferase center. The polypeptide is Large ribosomal subunit protein uL6 (Wolinella succinogenes (strain ATCC 29543 / DSM 1740 / CCUG 13145 / JCM 31913 / LMG 7466 / NCTC 11488 / FDC 602W) (Vibrio succinogenes)).